Here is a 65-residue protein sequence, read N- to C-terminus: Keratin-associated protein 20-2 (65 aa).

It belongs to the KRTAP type 20 family. Interacts with hair keratins.

In the hair cortex, hair keratin intermediate filaments are embedded in an interfilamentous matrix, consisting of hair keratin-associated proteins (KRTAP), which are essential for the formation of a rigid and resistant hair shaft through their extensive disulfide bond cross-linking with abundant cysteine residues of hair keratins. The matrix proteins include the high-sulfur and high-glycine-tyrosine keratins. This Homo sapiens (Human) protein is Keratin-associated protein 20-2 (KRTAP20-2).